The sequence spans 324 residues: Heparan sulfate 2-O-sulfotransferase hst-2 (324 aa).

The Cytoplasmic portion of the chain corresponds to 1 to 6 (MLWKKR). A helical; Signal-anchor for type II membrane protein transmembrane segment spans residues 7-24 (KVLYFAGISVFILILLLL). Topologically, residues 25–324 (KLNSKPKANV…QYHFEKIKPS (300 aa)) are lumenal. Asparagine 75 and asparagine 94 each carry an N-linked (GlcNAc...) asparagine glycan. Residues histidine 107 and histidine 109 contribute to the active site. Asparagine 161 is a glycosylation site (N-linked (GlcNAc...) asparagine). 2 disulfide bridges follow: cysteine 167/cysteine 175 and cysteine 188/cysteine 194.

Belongs to the sulfotransferase 3 family. In terms of assembly, homotrimer. Present in the hypodermis, muscle, distal tip cells (DTCs) and in neurons (at protein level).

The protein resides in the golgi apparatus membrane. In terms of biological role, catalyzes the transfer of sulfate to the C2-position of selected hexuronic acid residues within the maturing heparan sulfate (HS). Involved in cell adhesion and guidance by specifically modifying proteoglycans in the extracellular matrix and on the cell surface that are essential for axon migrations. This is Heparan sulfate 2-O-sulfotransferase hst-2 from Caenorhabditis elegans.